Consider the following 542-residue polypeptide: Leucine-rich repeat-containing protein 56 (542 aa).

5 LRR repeats span residues 94 to 115, 117 to 138, 139 to 160, 161 to 182, and 186 to 206; these read NLDQ…GTSL, HLQV…ASLP, ALKE…CLLE, QLEV…RYLQ, and RLAM…PGPT. The LRRCT domain occupies 207–250; it reads NKVPRGYNYRAEVRKLIPQLQVLDEVPAAHTGPPAPPRLSQDWL. Disordered stretches follow at residues 308 to 377, 396 to 475, and 507 to 542; these read LLSE…ADSS, LPYR…LQSR, and RLSP…PVPT. The segment covering 416–426 has biased composition (basic and acidic residues); it reads RVPEEQVHQAE. Residues 522–532 show a composition bias toward low complexity; that stretch reads PDAAARPPRAA.

The protein belongs to the LRRC56 family. Interacts with IFT88.

The protein localises to the cell projection. It is found in the cilium. Required for the assembly of dynein arms. In Homo sapiens (Human), this protein is Leucine-rich repeat-containing protein 56 (LRRC56).